The primary structure comprises 29 residues: Augerpeptide hheTx2 (29 aa).

In terms of processing, contains 4 disulfide bonds. As to expression, expressed by the venom duct.

It is found in the secreted. This chain is Augerpeptide hheTx2, found in Hastula hectica (Sea snail).